Here is a 449-residue protein sequence, read N- to C-terminus: Allantoinase (449 aa).

Zn(2+) contacts are provided by His61, His63, Lys148, His184, His240, and Asp313. Lys148 carries the N6-carboxylysine modification.

Belongs to the metallo-dependent hydrolases superfamily. Allantoinase family. In terms of assembly, homotetramer. It depends on Zn(2+) as a cofactor. Carboxylation allows a single lysine to coordinate two zinc ions.

The enzyme catalyses (S)-allantoin + H2O = allantoate + H(+). It participates in nitrogen metabolism; (S)-allantoin degradation; allantoate from (S)-allantoin: step 1/1. In terms of biological role, catalyzes the conversion of allantoin (5-ureidohydantoin) to allantoic acid by hydrolytic cleavage of the five-member hydantoin ring. In Desulfitobacterium hafniense (strain Y51), this protein is Allantoinase.